Consider the following 333-residue polypeptide: Probable tRNA pseudouridine synthase B (333 aa).

Asp-66 serves as the catalytic Nucleophile. One can recognise a PUA domain in the interval 233-308 (LKKIIVKDSA…EVVEITRVIM (76 aa)).

This sequence belongs to the pseudouridine synthase TruB family. Type 2 subfamily.

The enzyme catalyses uridine(55) in tRNA = pseudouridine(55) in tRNA. Its function is as follows. Could be responsible for synthesis of pseudouridine from uracil-55 in the psi GC loop of transfer RNAs. This is Probable tRNA pseudouridine synthase B from Methanococcus maripaludis (strain C6 / ATCC BAA-1332).